A 293-amino-acid polypeptide reads, in one-letter code: 4-hydroxy-tetrahydrodipicolinate synthase (293 aa).

Residue Thr-44 participates in pyruvate binding. Tyr-132 functions as the Proton donor/acceptor in the catalytic mechanism. Residue Lys-160 is the Schiff-base intermediate with substrate of the active site. Residue Ile-204 coordinates pyruvate.

This sequence belongs to the DapA family. As to quaternary structure, homotetramer; dimer of dimers.

Its subcellular location is the cytoplasm. The catalysed reaction is L-aspartate 4-semialdehyde + pyruvate = (2S,4S)-4-hydroxy-2,3,4,5-tetrahydrodipicolinate + H2O + H(+). The protein operates within amino-acid biosynthesis; L-lysine biosynthesis via DAP pathway; (S)-tetrahydrodipicolinate from L-aspartate: step 3/4. Its function is as follows. Catalyzes the condensation of (S)-aspartate-beta-semialdehyde [(S)-ASA] and pyruvate to 4-hydroxy-tetrahydrodipicolinate (HTPA). This chain is 4-hydroxy-tetrahydrodipicolinate synthase, found in Hyphomonas neptunium (strain ATCC 15444).